Reading from the N-terminus, the 88-residue chain is Cuticle protein 70, isoforms A and B (88 aa).

Repeat copies occupy residues Ala7–Ala10, Ala48–Ala51, Ala55–Pro58, Ala60–Val63, and Ala66–Val69.

Its function is as follows. Component of the cuticle of migratory locust which contains more than 100 different structural proteins. In Locusta migratoria (Migratory locust), this protein is Cuticle protein 70, isoforms A and B.